Consider the following 236-residue polypeptide: Leucyl/phenylalanyl-tRNA--protein transferase (236 aa).

The protein belongs to the L/F-transferase family.

The protein localises to the cytoplasm. The enzyme catalyses N-terminal L-lysyl-[protein] + L-leucyl-tRNA(Leu) = N-terminal L-leucyl-L-lysyl-[protein] + tRNA(Leu) + H(+). It catalyses the reaction N-terminal L-arginyl-[protein] + L-leucyl-tRNA(Leu) = N-terminal L-leucyl-L-arginyl-[protein] + tRNA(Leu) + H(+). It carries out the reaction L-phenylalanyl-tRNA(Phe) + an N-terminal L-alpha-aminoacyl-[protein] = an N-terminal L-phenylalanyl-L-alpha-aminoacyl-[protein] + tRNA(Phe). In terms of biological role, functions in the N-end rule pathway of protein degradation where it conjugates Leu, Phe and, less efficiently, Met from aminoacyl-tRNAs to the N-termini of proteins containing an N-terminal arginine or lysine. The chain is Leucyl/phenylalanyl-tRNA--protein transferase from Shewanella pealeana (strain ATCC 700345 / ANG-SQ1).